Reading from the N-terminus, the 1058-residue chain is Non-canonical non-ribosomal peptide synthetase FUB8 (1058 aa).

The tract at residues 43-365 (EISRDEPDRV…LASVVMHPDE (323 aa)) is adenylation (A) domain. The 78-residue stretch at 566–643 (TTEDVVRSGI…QLSHSVWTHL (78 aa)) folds into the Carrier domain. Residue serine 601 is modified to O-(pantetheine 4'-phosphoryl)serine. The segment at 680–921 (LTGTTGEIGS…IPIDLLAEVI (242 aa)) is thioester reductase (TR) domain.

Its pathway is mycotoxin biosynthesis. Its function is as follows. Non-canonical non-ribosomal peptide synthetase; part of the gene cluster that mediates the biosynthesis of fusaric acid, a mycotoxin with low to moderate toxicity to animals and humans, but with high phytotoxic properties. L-aspartate is suggested as fusaric acid amino acid precursor that is activated and further processed to O-acetyl-L-homoserine by cluster enzymes aspartate kinase FUB3 and homoserine O-acetyltransferase FUB5, as well as enzymes of the primary metabolism. The polyketide synthase (PKS) FUB1 generates the triketide trans-2-hexenal which is presumptively released by the hydrolase FUB4 and linked to the NRPS-bound amino acid precursor by NAD(P)-dependent dehydrogenase FUB6. FUB1, FUB4, and the non-canonical NRPS Fub8 may form an enzyme complex. Further processing of the NRPS-bound intermediate might be carried out by FUB6 and the sulfhydrylase FUB7, enabling a spontaneous electrocyclization to close the carbon backbone of fusaric acid. Dihydrofusaric acid is likely to be released via reduction by the thioester reductase (TR) domain of FUB8 whereupon the final oxidation to fusaric acid may (also) be performed by the FMN-dependent dehydrogenase FUB9. This chain is Non-canonical non-ribosomal peptide synthetase FUB8, found in Gibberella moniliformis (strain M3125 / FGSC 7600) (Maize ear and stalk rot fungus).